A 582-amino-acid chain; its full sequence is Sorting nexin-4 (582 aa).

Over residues 1–11 (MSSDDQFTSIQ) the composition is skewed to polar residues. Positions 1–111 (MSSDDQFTSI…VNQEPSSDSQ (111 aa)) are disordered. Composition is skewed to basic and acidic residues over residues 12–27 (WDRD…KVNK) and 35–54 (DEHH…KSNE). Positions 57–70 (NIQEDDETKDDNEP) are enriched in acidic residues. One can recognise a PX domain in the interval 116–249 (EINVVVTSPL…HLFVSDSADW (134 aa)). A 1,2-diacyl-sn-glycero-3-phospho-(1D-myo-inositol-3-phosphate)-binding residues include Arg-171, Lys-197, and Arg-216. Coiled-coil stretches lie at residues 300 to 329 (SKHK…KLDK) and 494 to 529 (SSVT…TNKI).

The protein belongs to the sorting nexin family.

The protein resides in the cytoplasm. It is found in the cytosol. It localises to the preautophagosomal structure membrane. The protein localises to the endosome membrane. Sorting nexin, involved in the separation or division of vacuoles throughout the entire life cycle of the cells. Involved in retrieval of late-Golgi SNAREs from post-Golgi endosomes to the trans-Golgi network, for cytoplasm to vacuole transport (Cvt), and autophagy of large cargos including mitophagy, pexophagy and glycophagy. The protein is Sorting nexin-4 (SNX4) of Debaryomyces hansenii (strain ATCC 36239 / CBS 767 / BCRC 21394 / JCM 1990 / NBRC 0083 / IGC 2968) (Yeast).